Here is a 234-residue protein sequence, read N- to C-terminus: Uridylate kinase (234 aa).

9–12 (KLSG) contributes to the ATP binding site. UMP is bound at residue glycine 51. 2 residues coordinate ATP: glycine 52 and arginine 56. UMP-binding positions include aspartate 71 and 132–139 (CGNPFFTT). ATP contacts are provided by threonine 159, tyrosine 165, and aspartate 168.

It belongs to the UMP kinase family. Homohexamer.

The protein resides in the cytoplasm. The enzyme catalyses UMP + ATP = UDP + ADP. Its pathway is pyrimidine metabolism; CTP biosynthesis via de novo pathway; UDP from UMP (UMPK route): step 1/1. Inhibited by UTP. Its function is as follows. Catalyzes the reversible phosphorylation of UMP to UDP. This is Uridylate kinase from Prochlorococcus marinus subsp. pastoris (strain CCMP1986 / NIES-2087 / MED4).